The sequence spans 348 residues: Uroporphyrinogen decarboxylase (348 aa).

Substrate contacts are provided by residues 27-31 (RQAGR), Phe-46, Asp-76, Tyr-152, Ser-207, and His-320.

Belongs to the uroporphyrinogen decarboxylase family. In terms of assembly, homodimer.

It is found in the cytoplasm. It catalyses the reaction uroporphyrinogen III + 4 H(+) = coproporphyrinogen III + 4 CO2. The protein operates within porphyrin-containing compound metabolism; protoporphyrin-IX biosynthesis; coproporphyrinogen-III from 5-aminolevulinate: step 4/4. Catalyzes the decarboxylation of four acetate groups of uroporphyrinogen-III to yield coproporphyrinogen-III. This chain is Uroporphyrinogen decarboxylase, found in Bacillus thuringiensis (strain Al Hakam).